Consider the following 197-residue polypeptide: Putative manganese efflux pump MntP (197 aa).

The next 6 membrane-spanning stretches (helical) occupy residues 8-28 (VILL…GLGA), 43-63 (VYAA…GYLL), 66-86 (VLLG…LIVL), 123-143 (LAIA…LLAL), 146-166 (WLAC…GIYL), and 177-197 (KAEI…MLFS).

This sequence belongs to the MntP (TC 9.B.29) family.

The protein resides in the cell inner membrane. Its function is as follows. Probably functions as a manganese efflux pump. This Psychrobacter arcticus (strain DSM 17307 / VKM B-2377 / 273-4) protein is Putative manganese efflux pump MntP.